The following is a 382-amino-acid chain: Homoserine O-acetyltransferase (382 aa).

An AB hydrolase-1 domain is found at 52–356 (NVVMVLHALT…TYGHDGFLVE (305 aa)). Ser157 acts as the Nucleophile in catalysis. Arg227 provides a ligand contact to substrate. Catalysis depends on residues Asp320 and His350. Position 351 (Asp351) interacts with substrate.

This sequence belongs to the AB hydrolase superfamily. MetX family. In terms of assembly, homodimer.

It is found in the cytoplasm. It catalyses the reaction L-homoserine + acetyl-CoA = O-acetyl-L-homoserine + CoA. It functions in the pathway amino-acid biosynthesis; L-methionine biosynthesis via de novo pathway; O-acetyl-L-homoserine from L-homoserine: step 1/1. Its function is as follows. Transfers an acetyl group from acetyl-CoA to L-homoserine, forming acetyl-L-homoserine. The protein is Homoserine O-acetyltransferase of Mycobacterium leprae (strain TN).